We begin with the raw amino-acid sequence, 91 residues long: uncharacterized protein (91 aa).

3 consecutive transmembrane segments (helical) span residues 4 to 21 (YAII…LRRG), 28 to 50 (IIEV…SHAV), and 60 to 82 (VKAF…GTYL).

The protein localises to the cell membrane. This is an uncharacterized protein from Archaeoglobus fulgidus (strain ATCC 49558 / DSM 4304 / JCM 9628 / NBRC 100126 / VC-16).